Here is a 381-residue protein sequence, read N- to C-terminus: Homoserine O-acetyltransferase (381 aa).

The region spanning 47-359 (NAILICHALT…DKGHDAFLLD (313 aa)) is the AB hydrolase-1 domain. The Nucleophile role is filled by Ser153. A substrate-binding site is contributed by Arg223. Catalysis depends on residues Asp320 and His353. Asp354 contributes to the substrate binding site.

Belongs to the AB hydrolase superfamily. MetX family. As to quaternary structure, homodimer.

It is found in the cytoplasm. It catalyses the reaction L-homoserine + acetyl-CoA = O-acetyl-L-homoserine + CoA. Its pathway is amino-acid biosynthesis; L-methionine biosynthesis via de novo pathway; O-acetyl-L-homoserine from L-homoserine: step 1/1. Functionally, transfers an acetyl group from acetyl-CoA to L-homoserine, forming acetyl-L-homoserine. The chain is Homoserine O-acetyltransferase from Acidiphilium cryptum (strain JF-5).